A 352-amino-acid chain; its full sequence is Fe(3+) ions import ATP-binding protein FbpC (352 aa).

The region spanning 5-239 (LHIGHLSKSF…PADLDAALFI (235 aa)) is the ABC transporter domain. Residue 37–44 (GASGCGKT) participates in ATP binding.

It belongs to the ABC transporter superfamily. Fe(3+) ion importer (TC 3.A.1.10) family. In terms of assembly, the complex is composed of two ATP-binding proteins (FbpC), two transmembrane proteins (FbpB) and a solute-binding protein (FbpA).

Its subcellular location is the cell inner membrane. It catalyses the reaction Fe(3+)(out) + ATP + H2O = Fe(3+)(in) + ADP + phosphate + H(+). Functionally, part of the ABC transporter complex FbpABC involved in Fe(3+) ions import. Responsible for energy coupling to the transport system. This chain is Fe(3+) ions import ATP-binding protein FbpC, found in Neisseria gonorrhoeae (strain ATCC 700825 / FA 1090).